Consider the following 556-residue polypeptide: Urocanate hydratase (556 aa).

NAD(+) is bound by residues 52 to 53 (GG), Q130, 176 to 178 (GMG), E196, R201, 242 to 243 (NA), 263 to 267 (QTSAH), 273 to 274 (YL), and Y322. C410 is a catalytic residue. G492 is an NAD(+) binding site.

Belongs to the urocanase family. The cofactor is NAD(+).

Its subcellular location is the cytoplasm. It carries out the reaction 4-imidazolone-5-propanoate = trans-urocanate + H2O. The protein operates within amino-acid degradation; L-histidine degradation into L-glutamate; N-formimidoyl-L-glutamate from L-histidine: step 2/3. In terms of biological role, catalyzes the conversion of urocanate to 4-imidazolone-5-propionate. This is Urocanate hydratase from Shewanella sediminis (strain HAW-EB3).